A 438-amino-acid chain; its full sequence is sn-glycerol-3-phosphate-binding periplasmic protein UgpB (438 aa).

A signal peptide spans 1-23 (MKPLRYTASALALGLALMANAQA). Positions 65, 89, 144, 270, 307, 346, and 397 each coordinate sn-glycerol 3-phosphate.

This sequence belongs to the bacterial solute-binding protein 1 family. The complex is composed of two ATP-binding proteins (UgpC), two transmembrane proteins (UgpA and UgpE) and a solute-binding protein (UgpB).

It is found in the periplasm. Functionally, part of the ABC transporter complex UgpBAEC involved in sn-glycerol-3-phosphate (G3P) import. Binds G3P. The polypeptide is sn-glycerol-3-phosphate-binding periplasmic protein UgpB (ugpB) (Escherichia coli O6:K15:H31 (strain 536 / UPEC)).